Here is a 639-residue protein sequence, read N- to C-terminus: CTTNBP2 N-terminal-like protein (639 aa).

Residues 87–285 (MKQCKNMQER…DLEASHQHSS (199 aa)) are a coiled coil. Phosphoserine is present on residues Ser284 and Ser285. Disordered stretches follow at residues 387–430 (VENG…PCSS), 463–490 (RHKF…LSPT), and 511–609 (RFTS…AASL). Low complexity-rich tracts occupy residues 407–430 (PSSG…PCSS) and 467–477 (QSQADQDQQAS). Phosphoserine is present on residues Ser481, Ser488, Ser523, Ser527, Ser560, Ser563, and Ser568. Residues 511-529 (RFTSQQGPIKPVSPNSSPF) are compositionally biased toward polar residues. 2 positions are modified to phosphothreonine: Thr570 and Thr590. A compositionally biased stretch (low complexity) spans 587 to 600 (PGLTPSPSATTPLT). Ser592 bears the Phosphoserine mark.

In terms of assembly, interacts with CTTN/cortactin; this interaction may redistribute CTTN to stress fibers. May form homomers. Associates with the core of STRIPAK complexes composed of PP2A catalytic and scaffolding subunits, the striatins (PP2A regulatory subunits), the striatin-associated proteins MOB4, STRIP1 and STRIP2, PDCD10 and members of the STE20 kinases, such as STK24 and STK26.

The protein resides in the cell projection. Its subcellular location is the lamellipodium. It is found in the cytoplasm. It localises to the cytoskeleton. The protein localises to the stress fiber. Functionally, regulates lamellipodial actin dynamics in a CTTN-dependent manner. Associates with core striatin-interacting phosphatase and kinase (STRIPAK) complex to form CTTNBP2NL-STRIPAK complexes. STRIPAK complexes have critical roles in protein (de)phosphorylation and are regulators of multiple signaling pathways including Hippo, MAPK, nuclear receptor and cytoskeleton remodeling. Different types of STRIPAK complexes are involved in a variety of biological processes such as cell growth, differentiation, apoptosis, metabolism and immune regulation. This Pongo abelii (Sumatran orangutan) protein is CTTNBP2 N-terminal-like protein (CTTNBP2NL).